The primary structure comprises 296 residues: Homoserine kinase (296 aa).

An ATP-binding site is contributed by 84–94 (PLARGLGSSSS).

This sequence belongs to the GHMP kinase family. Homoserine kinase subfamily.

It is found in the cytoplasm. It catalyses the reaction L-homoserine + ATP = O-phospho-L-homoserine + ADP + H(+). The protein operates within amino-acid biosynthesis; L-threonine biosynthesis; L-threonine from L-aspartate: step 4/5. Functionally, catalyzes the ATP-dependent phosphorylation of L-homoserine to L-homoserine phosphate. The chain is Homoserine kinase (thrB) from Lactococcus lactis subsp. cremoris (Streptococcus cremoris).